The primary structure comprises 164 residues: MQKQHQRQHKVELVANLKSQFDSAKALLICDYKGLSVRKLEALRNKARIQGIKVQVIKNTLAHIAMKEAGCADLDLKETNVFLWGDDQIALSKLVFDFQKEHKDHFVLKAGLFDKESVSVAHVEAVSKLPSKEELMGMLLSVWTAPARYFVTGLDNLRKAKEEN.

It belongs to the universal ribosomal protein uL10 family. In terms of assembly, part of the ribosomal stalk of the 50S ribosomal subunit. The N-terminus interacts with L11 and the large rRNA to form the base of the stalk. The C-terminus forms an elongated spine to which L12 dimers bind in a sequential fashion forming a multimeric L10(L12)X complex.

Its function is as follows. Forms part of the ribosomal stalk, playing a central role in the interaction of the ribosome with GTP-bound translation factors. In Helicobacter pylori (strain P12), this protein is Large ribosomal subunit protein uL10.